A 737-amino-acid polypeptide reads, in one-letter code: Ribosome-releasing factor 2, mitochondrial (737 aa).

The N-terminal 29 residues, 1–29 (MLKYALHSGGMPRNRLLRQLSAYIFRRSY), are a transit peptide targeting the mitochondrion. The region spanning 31–310 (SNIRNIGILA…AVNTYLPAPE (280 aa)) is the tr-type G domain. Residues 40-47 (AHIDAGKT), 104-108 (DTPGH), and 158-161 (NKMD) each bind GTP.

Belongs to the TRAFAC class translation factor GTPase superfamily. Classic translation factor GTPase family. EF-G/EF-2 subfamily.

It localises to the mitochondrion. Functionally, mitochondrial GTPase that mediates the disassembly of ribosomes from messenger RNA at the termination of mitochondrial protein biosynthesis. Not involved in the GTP-dependent ribosomal translocation step during translation elongation. The protein is Ribosome-releasing factor 2, mitochondrial of Drosophila persimilis (Fruit fly).